The chain runs to 815 residues: (-)-kolavenyl diphosphate synthase TPS10, chloroplastic (815 aa).

Residues 1–50 (MFMSSSSSSHARRPQLSSFSYLHPPLPFPGLSFSSTRDKRVNFDSTRIIS) constitute a chloroplast transit peptide. Lys-247 lines the substrate pocket. Mg(2+)-binding residues include Asp-379 and Asp-381. The DXDD motif signature appears at 379 to 382 (DIDD). A substrate-binding site is contributed by Lys-465.

Belongs to the terpene synthase family. Tpsc subfamily. Requires Mg(2+) as cofactor.

Its subcellular location is the plastid. The protein resides in the chloroplast. It carries out the reaction (2E,6E,10E)-geranylgeranyl diphosphate = (-)-kolavenyl diphosphate. With respect to regulation, inhibited by high concentrations of magnesium. Its function is as follows. Diterpene synthase that catalyzes the formation of (-)-kolavenyl diphosphate from geranylgeranyl diphosphate (GGPP). This is (-)-kolavenyl diphosphate synthase TPS10, chloroplastic from Tripterygium wilfordii (Thunder God vine).